The chain runs to 1101 residues: Rho guanine nucleotide exchange factor gef2 (1101 aa).

A disordered region spans residues 203 to 222; that stretch reads EDSRKKTSSPSPSFASSKDA. A compositionally biased stretch (low complexity) spans 210 to 219; the sequence is SSPSPSFASS. Residues 230–428 form the DH domain; sequence KKKSLLIEMM…KNIAEMPTVD (199 aa). Phosphoserine occurs at positions 736 and 977.

The protein resides in the cytoplasm. It is found in the cytoskeleton. The protein localises to the microtubule organizing center. Its subcellular location is the spindle pole body. Has a role in the control of cell polarity and cytokinesis. Involved in bipolar growth and septum formation. This chain is Rho guanine nucleotide exchange factor gef2 (gef2), found in Schizosaccharomyces pombe (strain 972 / ATCC 24843) (Fission yeast).